The primary structure comprises 358 residues: Stearoyl-CoA desaturase 2 (358 aa).

Over 1–71 (MPAHILQEIS…EGPPPKLEYV (71 aa)) the chain is Cytoplasmic. The segment at 16–39 (TTTITAPPSGGQQNGGEKFEKSSH) is disordered. The helical transmembrane segment at 72-92 (WRNIILMALLHLGALYGITLV) threads the bilayer. Position 74 (Asn-74) interacts with substrate. At 93 to 96 (PSCK) the chain is on the lumenal side. The helical transmembrane segment at 97–117 (LYTCLFAYLYYVISALGITAG) threads the bilayer. Over 118–216 (AHRLWSHRTY…EKLVMFQRRY (99 aa)) the chain is Cytoplasmic. Fe cation contacts are provided by His-119 and His-124. A Histidine box-1 motif is present at residues 119–124 (HRLWSH). The substrate site is built by Asn-147, Arg-154, and Asp-155. Fe cation contacts are provided by His-156, His-159, and His-160. The Histidine box-2 signature appears at 156–160 (HRAHH). Substrate-binding residues include Arg-187 and Lys-188. The chain crosses the membrane as a helical span at residues 217–236 (YKPGLLLMCFVLPTLVPWYC). Residues 237 to 240 (WGET) are Lumenal-facing. Residues 241 to 262 (FVNSLCVSTFLRYAVVLNATWL) traverse the membrane as a helical segment. Trp-261 is a binding site for substrate. Over 263–358 (VNSAAHLYGY…RTGDGSCKSG (96 aa)) the chain is Cytoplasmic. Fe cation contacts are provided by His-268, His-297, His-300, and His-301. A Histidine box-3 motif is present at residues 297–301 (HNYHH).

Belongs to the fatty acid desaturase type 1 family. Fe(2+) is required as a cofactor. In terms of tissue distribution, detected in brain and skin. Highly expressed in brain, and detected at low levels in heart, stomach, lung and testis. Detected both in dermis and epidermis.

It localises to the endoplasmic reticulum membrane. It is found in the microsome membrane. It catalyses the reaction octadecanoyl-CoA + 2 Fe(II)-[cytochrome b5] + O2 + 2 H(+) = (9Z)-octadecenoyl-CoA + 2 Fe(III)-[cytochrome b5] + 2 H2O. The catalysed reaction is hexadecanoyl-CoA + 2 Fe(II)-[cytochrome b5] + O2 + 2 H(+) = (9Z)-hexadecenoyl-CoA + 2 Fe(III)-[cytochrome b5] + 2 H2O. Its function is as follows. Stearoyl-CoA desaturase that utilizes O(2) and electrons from reduced cytochrome b5 to introduce the first double bond into saturated fatty acyl-CoA substrates. Catalyzes the insertion of a cis double bond at the delta-9 position into fatty acyl-CoA substrates including palmitoyl-CoA and stearoyl-CoA. Gives rise to a mixture of 16:1 and 18:1 unsaturated fatty acids. Contributes to the biosynthesis of membrane phospholipids, cholesterol esters and triglycerides, especially during embryonic development and in neonates. Important for normal permeability barrier function of the skin in neonates. The sequence is that of Stearoyl-CoA desaturase 2 (Scd2) from Mus musculus (Mouse).